The chain runs to 2259 residues: Protein Ycf2 (2259 aa).

1556-1563 (GSQETGRS) lines the ATP pocket.

Belongs to the Ycf2 family.

The protein resides in the plastid. The protein localises to the chloroplast stroma. Its function is as follows. Probable ATPase of unknown function. Its presence in a non-photosynthetic plant (Epifagus virginiana) and experiments in tobacco indicate that it has an essential function which is probably not related to photosynthesis. The sequence is that of Protein Ycf2 from Physcomitrium patens (Spreading-leaved earth moss).